We begin with the raw amino-acid sequence, 105 residues long: Large ribosomal subunit protein bL21c (105 aa).

This sequence belongs to the bacterial ribosomal protein bL21 family. Part of the 50S ribosomal subunit.

It localises to the plastid. It is found in the chloroplast. Its function is as follows. This protein binds to 23S rRNA. This is Large ribosomal subunit protein bL21c from Trieres chinensis (Marine centric diatom).